Consider the following 133-residue polypeptide: MEPFIGTWKMEKSEGFDKIMERLGVDYFTRKMGNMMKPNLIISDLGDGRYNMRSESKFKTSEFSFKLGEQFKEVTPDSREVMSMLTVEDGVLKQEQVGKDKTTYIDRVVYGNELRATVKADELVCVRTYSRGM.

A fatty acid is bound by residues Arg-107 and 127-129 (RTY).

The protein belongs to the calycin superfamily. Fatty-acid binding protein (FABP) family.

In terms of biological role, may play a role in the acquisition, storage, and transport of lipids, and may be important to the organism since it is incapable of synthesizing most of its lipids de novo. The chain is Fatty acid-binding protein homolog 2 (FABP2) from Echinococcus granulosus (Hydatid tapeworm).